Consider the following 1077-residue polypeptide: MVPYFEMAAASNFSFLCGASHPQELVERAHALDLSGIGIADRNTLAGVVRAHAQWKDIRKESGFRLFIGCRLSFIDGTPDMVVYPRDRAAYGQLCRLLTEGKHRAAIKGECHLEWADLLFRARQFQIAVFPPDEDEPDFAARLTEIAQAAPGSVWLALTMPHQGQDGRRAERIARFAAQAGVPLIATNDVLYHHPDRRPLQDVLTATRHHTTVFAAGRLLEKNAERHLKPPHEMVRLFRDYPEAIAATADFVAPITFQLDELKYAYPDEPIPPGKTAQQHLYDLVWEGAARHYGADIIPPKVQGLINKELALIARLEYEPYFLTVYDIVTHAREKGILCQGRGSAANSVVCFCLGITGVNPTQVDLLFERFISAERKEPPDIDVDFEHERREEVMQYVYDRYSRDRAAIVATVISYRSRSAIRDVGKALGLSEDVTAALANTVWGLSGGGIDRQHIRQAGLDPDNPIIQRAVELAITLIGFPRHLSQHVGGFVLARDRLDETVPIGPAAMDKRSFIEWDKDDIDEVGLMKVDVLSLGMLTCIRKAFDLIHQHKPQLYGGEKLTLASLPREDKAVYDMLCKGDSLGVFQVESRAQMNMLPRLRPQEFYDLVIEVAIVRPGPIQGDMVHPYLRRRSGQEPCTLPSPSPQHGPANELQQILGKTKGVPLFQEQAMRIAMEAAKFTPEEANQLRRAMATFRKMGTIHTMEKKMIDGMVNRGYDRTFAENCFNQIKGFGEYGFPESHAASFAHLVYISAWLKCHHPEVFAAALLNSQPMVFYAPAQIVRDAREHGVTVLPVDVNFSQWDNILEETPDVHLALRLGFRQIDGFSKRDTELLIADRQEPYRTIEDMHRRLRLDRRAFTLLADADAFGSLDIDRRAALWAVRRLPNDETLPLFRAAAASELAQEPRTKLPEMAASEHVIADYETTRLSLKGHPLQYLREGLAAEGVSTCRAVQEGADGRRMKVAGVVTVRQRPGSAKGVVFLTIEDETGIANIVIWPKIMKVFRREVMSARLIHIEGRIQRSLEGVVHLVAAKLQDRSAALIEMSGREAQRLIAPSQMAHHPRNVRVMPNSRDFH.

Belongs to the DNA polymerase type-C family. DnaE2 subfamily.

It is found in the cytoplasm. The enzyme catalyses DNA(n) + a 2'-deoxyribonucleoside 5'-triphosphate = DNA(n+1) + diphosphate. Its function is as follows. DNA polymerase involved in damage-induced mutagenesis and translesion synthesis (TLS). It is not the major replicative DNA polymerase. In Brucella suis biovar 1 (strain 1330), this protein is Error-prone DNA polymerase.